The primary structure comprises 404 residues: Argininosuccinate synthase (404 aa).

ATP contacts are provided by residues 10 to 18 (AYSGGVDTS) and alanine 38. Tyrosine 89 provides a ligand contact to L-citrulline. ATP is bound at residue glycine 119. Threonine 121, asparagine 125, and aspartate 126 together coordinate L-aspartate. Residue asparagine 125 participates in L-citrulline binding. Residues arginine 129, serine 177, serine 186, glutamate 262, and tyrosine 274 each contribute to the L-citrulline site.

The protein belongs to the argininosuccinate synthase family. Type 1 subfamily. As to quaternary structure, homotetramer.

The protein resides in the cytoplasm. It carries out the reaction L-citrulline + L-aspartate + ATP = 2-(N(omega)-L-arginino)succinate + AMP + diphosphate + H(+). Its pathway is amino-acid biosynthesis; L-arginine biosynthesis; L-arginine from L-ornithine and carbamoyl phosphate: step 2/3. The protein is Argininosuccinate synthase of Prochlorococcus marinus (strain MIT 9312).